Consider the following 94-residue polypeptide: Small ribosomal subunit protein uS19m (94 aa).

It belongs to the universal ribosomal protein uS19 family.

The protein resides in the mitochondrion. In Petunia hybrida (Petunia), this protein is Small ribosomal subunit protein uS19m (RPS19).